Here is a 268-residue protein sequence, read N- to C-terminus: 3-deoxy-manno-octulosonate cytidylyltransferase (268 aa).

Belongs to the KdsB family.

It localises to the cytoplasm. The catalysed reaction is 3-deoxy-alpha-D-manno-oct-2-ulosonate + CTP = CMP-3-deoxy-beta-D-manno-octulosonate + diphosphate. The protein operates within nucleotide-sugar biosynthesis; CMP-3-deoxy-D-manno-octulosonate biosynthesis; CMP-3-deoxy-D-manno-octulosonate from 3-deoxy-D-manno-octulosonate and CTP: step 1/1. It functions in the pathway bacterial outer membrane biogenesis; lipopolysaccharide biosynthesis. In terms of biological role, activates KDO (a required 8-carbon sugar) for incorporation into bacterial lipopolysaccharide in Gram-negative bacteria. This chain is 3-deoxy-manno-octulosonate cytidylyltransferase, found in Ralstonia pickettii (strain 12J).